The following is a 705-amino-acid chain: Tetratricopeptide repeat protein 12 (705 aa).

A Phosphothreonine modification is found at T71. TPR repeat units follow at residues 106–139 (ADAL…LKDM), 140–173 (KVLY…DEKC), and 174–207 (TKAY…NPKL).

In terms of tissue distribution, expressed in testis and in epithelial cells of trachea and bronchial tube.

It localises to the cytoplasm. Cytoplasmic protein that plays a role in the proper assembly of dynein arm complexes in motile cilia in both respiratory cells and sperm flagella. The sequence is that of Tetratricopeptide repeat protein 12 (TTC12) from Homo sapiens (Human).